The primary structure comprises 306 residues: Agmatinase (306 aa).

Mn(2+) is bound by residues His126, Asp149, His151, Asp153, Asp230, and Asp232.

Belongs to the arginase family. Agmatinase subfamily. Mn(2+) is required as a cofactor.

The enzyme catalyses agmatine + H2O = urea + putrescine. It functions in the pathway amine and polyamine biosynthesis; putrescine biosynthesis via agmatine pathway; putrescine from agmatine: step 1/1. Its function is as follows. Catalyzes the formation of putrescine from agmatine. This Shigella boydii serotype 18 (strain CDC 3083-94 / BS512) protein is Agmatinase.